Here is a 96-residue protein sequence, read N- to C-terminus: Protein Vpr (96 aa).

Residues 1–42 (MEQAPEDQGPQREPHNEWTLELLEEIKNEAVRHFPRVWLHQL) form a homooligomerization region. Ser79, Ser94, and Ser96 each carry phosphoserine; by host.

The protein belongs to the HIV-1 VPR protein family. As to quaternary structure, homooligomer, may form homodimer. Interacts with p6-gag region of the Pr55 Gag precursor protein through a (Leu-X-X)4 motif near the C-terminus of the P6gag protein. Interacts with host UNG. May interact with host RAD23A/HHR23A. Interacts with host VPRBP/DCAF1, leading to hijack the CUL4A-RBX1-DDB1-DCAF1/VPRBP complex, mediating ubiquitination of host proteins such as TERT and ZGPAT and arrest of the cell cycle in G2 phase. Post-translationally, phosphorylated on several residues by host. These phosphorylations regulate VPR activity for the nuclear import of the HIV-1 pre-integration complex.

It localises to the virion. Its subcellular location is the host nucleus. It is found in the host extracellular space. Its function is as follows. During virus replication, may deplete host UNG protein, and incude G2-M cell cycle arrest. Acts by targeting specific host proteins for degradation by the 26S proteasome, through association with the cellular CUL4A-DDB1 E3 ligase complex by direct interaction with host VPRPB/DCAF-1. Cell cycle arrest reportedly occurs within hours of infection and is not blocked by antiviral agents, suggesting that it is initiated by the VPR carried into the virion. Additionally, VPR induces apoptosis in a cell cycle dependent manner suggesting that these two effects are mechanistically linked. Detected in the serum and cerebrospinal fluid of AIDS patient, VPR may also induce cell death to bystander cells. Functionally, during virus entry, plays a role in the transport of the viral pre-integration (PIC) complex to the host nucleus. This function is crucial for viral infection of non-dividing macrophages. May act directly at the nuclear pore complex, by binding nucleoporins phenylalanine-glycine (FG)-repeat regions. The sequence is that of Protein Vpr from Homo sapiens (Human).